We begin with the raw amino-acid sequence, 69 residues long: Large ribosomal subunit protein bL32c (69 aa).

It belongs to the bacterial ribosomal protein bL32 family.

The protein resides in the plastid. It localises to the chloroplast. This Marchantia polymorpha (Common liverwort) protein is Large ribosomal subunit protein bL32c (rpl32).